The following is a 2543-amino-acid chain: Highly reducing polyketide synthase PKS2 (2543 aa).

The region spanning 4 to 425 (EPRIAVIGLS…GSNSAILLEG (422 aa)) is the Ketosynthase family 3 (KS3) domain. Active-site for beta-ketoacyl synthase activity residues include Cys-174, His-309, and His-349. Residues 573 to 902 (VFTGQGAQHA…TYLPTLFRGT (330 aa)) form a malonyl-CoA:ACP transacylase (MAT) domain region. The active-site For malonyltransferase activity is Ser-662. Residues 969-1101 (HPLLGRKISP…GQIEAEMTDM (133 aa)) are N-terminal hotdog fold. One can recognise a PKS/mFAS DH domain in the interval 969-1281 (HPLLGRKISP…FRNIGSAEEV (313 aa)). The interval 969–1283 (HPLLGRKISP…NIGSAEEVID (315 aa)) is dehydratase (DH) domain. His-1001 (proton acceptor; for dehydratase activity) is an active-site residue. The interval 1119–1281 (TGLKEHDINA…FRNIGSAEEV (163 aa)) is C-terminal hotdog fold. Asp-1188 acts as the Proton donor; for dehydratase activity in catalysis. Residues 1438-1631 (SKVLGYLTEY…LPSRYGTDKP (194 aa)) form a methyltransferase (CMet) domain region. The interval 1847-2159 (GSPDTIYFQR…SGEHMGKMVI (313 aa)) is enoylreductase (ER) domain. The interval 2184-2359 (ATYLVAGGTR…YTVSIALPVV (176 aa)) is ketoreductase (KR) domain. The 78-residue stretch at 2463 to 2540 (DPLIGLTEAM…ALATEILSQR (78 aa)) folds into the Carrier domain. At Ser-2500 the chain carries O-(pantetheine 4'-phosphoryl)serine.

The protein operates within secondary metabolite biosynthesis. In terms of biological role, highly reducing polyketide synthase; part of the gene cluster that mediates the biosynthesis of phomenoic acid, a long chain aliphatic carboxylic acid that does not appear to be essential for pathogenicity but may play a role in allowing to outcompete other fungi in the environmental niche via its antifungal properties. The polyketide synthase produces the long methylated aliphatic carboxylic acid chain of phomenoic acid. The cluster-specific cytochrome P450 monooxygenase may then hydroxylate the methyl group of carbon 31. The putative dehydrogenase YogA, which has no obvious role in phomenoic acid biosynthesis, may further modify phomenoic acid to produce a compound not identified yet. This Leptosphaeria maculans (strain JN3 / isolate v23.1.3 / race Av1-4-5-6-7-8) (Blackleg fungus) protein is Highly reducing polyketide synthase PKS2.